We begin with the raw amino-acid sequence, 74 residues long: Translation initiation factor IF-1 2 (74 aa).

The S1-like domain occupies 1-73 (MTKNKNVIEV…TRGRIVFRYR (73 aa)).

Belongs to the IF-1 family. Component of the 30S ribosomal translation pre-initiation complex which assembles on the 30S ribosome in the order IF-2 and IF-3, IF-1 and N-formylmethionyl-tRNA(fMet); mRNA recruitment can occur at any time during PIC assembly.

The protein resides in the cytoplasm. In terms of biological role, one of the essential components for the initiation of protein synthesis. Stabilizes the binding of IF-2 and IF-3 on the 30S subunit to which N-formylmethionyl-tRNA(fMet) subsequently binds. Helps modulate mRNA selection, yielding the 30S pre-initiation complex (PIC). Upon addition of the 50S ribosomal subunit IF-1, IF-2 and IF-3 are released leaving the mature 70S translation initiation complex. The polypeptide is Translation initiation factor IF-1 2 (Streptomyces avermitilis (strain ATCC 31267 / DSM 46492 / JCM 5070 / NBRC 14893 / NCIMB 12804 / NRRL 8165 / MA-4680)).